Consider the following 695-residue polypeptide: DNA ligase (695 aa).

Residues 44–48, 93–94, and E124 contribute to the NAD(+) site; these read DAEYD and SL. K126 serves as the catalytic N6-AMP-lysine intermediate. NAD(+) contacts are provided by R147, E187, K304, and K328. 4 residues coordinate Zn(2+): C422, C425, C440, and C445. The BRCT domain occupies 606–695; it reads TVQGPLAGKT…GIEVEAAARS (90 aa).

The protein belongs to the NAD-dependent DNA ligase family. LigA subfamily. Mg(2+) is required as a cofactor. The cofactor is Mn(2+).

The enzyme catalyses NAD(+) + (deoxyribonucleotide)n-3'-hydroxyl + 5'-phospho-(deoxyribonucleotide)m = (deoxyribonucleotide)n+m + AMP + beta-nicotinamide D-nucleotide.. Functionally, DNA ligase that catalyzes the formation of phosphodiester linkages between 5'-phosphoryl and 3'-hydroxyl groups in double-stranded DNA using NAD as a coenzyme and as the energy source for the reaction. It is essential for DNA replication and repair of damaged DNA. This is DNA ligase from Thermomicrobium roseum (strain ATCC 27502 / DSM 5159 / P-2).